The primary structure comprises 321 residues: L-lactate dehydrogenase (321 aa).

Residues Val-19, Asp-40, Lys-45, Tyr-71, and 85–86 (GA) contribute to the NAD(+) site. Substrate is bound by residues Gln-88, Arg-94, and 126–129 (NPVD). NAD(+) is bound by residues 124–126 (ATN) and Ser-149. 154–157 (DTAR) serves as a coordination point for substrate. Beta-D-fructose 1,6-bisphosphate contacts are provided by Arg-159 and His-174. His-181 serves as the catalytic Proton acceptor. Tyr-226 is subject to Phosphotyrosine. Thr-235 contributes to the substrate binding site.

The protein belongs to the LDH/MDH superfamily. LDH family. Homotetramer.

It is found in the cytoplasm. It carries out the reaction (S)-lactate + NAD(+) = pyruvate + NADH + H(+). It participates in fermentation; pyruvate fermentation to lactate; (S)-lactate from pyruvate: step 1/1. Allosterically activated by fructose 1,6-bisphosphate (FBP). Catalyzes the conversion of lactate to pyruvate. This chain is L-lactate dehydrogenase, found in Oceanobacillus iheyensis (strain DSM 14371 / CIP 107618 / JCM 11309 / KCTC 3954 / HTE831).